We begin with the raw amino-acid sequence, 158 residues long: 2-C-methyl-D-erythritol 2,4-cyclodiphosphate synthase (158 aa).

A divalent metal cation contacts are provided by D9 and H11. 4-CDP-2-C-methyl-D-erythritol 2-phosphate is bound by residues 9-11 and 35-36; these read DVH and HS. Residue H43 coordinates a divalent metal cation. 4-CDP-2-C-methyl-D-erythritol 2-phosphate-binding positions include 57-59, 62-66, 133-136, F140, and R143; these read DIG, FPDTD, and TTTE.

Belongs to the IspF family. In terms of assembly, homotrimer. It depends on a divalent metal cation as a cofactor.

It catalyses the reaction 4-CDP-2-C-methyl-D-erythritol 2-phosphate = 2-C-methyl-D-erythritol 2,4-cyclic diphosphate + CMP. It participates in isoprenoid biosynthesis; isopentenyl diphosphate biosynthesis via DXP pathway; isopentenyl diphosphate from 1-deoxy-D-xylulose 5-phosphate: step 4/6. Involved in the biosynthesis of isopentenyl diphosphate (IPP) and dimethylallyl diphosphate (DMAPP), two major building blocks of isoprenoid compounds. Catalyzes the conversion of 4-diphosphocytidyl-2-C-methyl-D-erythritol 2-phosphate (CDP-ME2P) to 2-C-methyl-D-erythritol 2,4-cyclodiphosphate (ME-CPP) with a corresponding release of cytidine 5-monophosphate (CMP). The chain is 2-C-methyl-D-erythritol 2,4-cyclodiphosphate synthase from Haemophilus influenzae (strain PittEE).